A 104-amino-acid chain; its full sequence is uncharacterized protein (104 aa).

This sequence belongs to the mimivirus L28/L54 family.

This is an uncharacterized protein from Acanthamoeba polyphaga mimivirus (APMV).